The primary structure comprises 292 residues: Cytidine deaminase (292 aa).

2 consecutive CMP/dCMP-type deaminase domains span residues 47 to 167 (TPLK…FGPK) and 186 to 292 (DHQD…YYSL). Substrate is bound at residue 88–90 (NQE). H101 serves as a coordination point for Zn(2+). The active-site Proton donor is E103. The Zn(2+) site is built by C128 and C131.

It belongs to the cytidine and deoxycytidylate deaminase family. As to quaternary structure, homodimer. The cofactor is Zn(2+).

The catalysed reaction is cytidine + H2O + H(+) = uridine + NH4(+). The enzyme catalyses 2'-deoxycytidine + H2O + H(+) = 2'-deoxyuridine + NH4(+). This enzyme scavenges exogenous and endogenous cytidine and 2'-deoxycytidine for UMP synthesis. In Haemophilus influenzae (strain 86-028NP), this protein is Cytidine deaminase.